The chain runs to 923 residues: RNA polymerase-associated protein RapA (923 aa).

The region spanning 162-332 (EVGNRVNPRV…FARLRLLDPE (171 aa)) is the Helicase ATP-binding domain. 175–182 (DEVGLGKT) is a binding site for ATP. Residues 278–281 (DEAH) carry the DEAH box motif. Residues 443 to 597 (KIDWLIDFLK…TCPMGMALFS (155 aa)) enclose the Helicase C-terminal domain.

This sequence belongs to the SNF2/RAD54 helicase family. RapA subfamily. As to quaternary structure, interacts with the RNAP. Has a higher affinity for the core RNAP than for the holoenzyme. Its ATPase activity is stimulated by binding to RNAP.

Transcription regulator that activates transcription by stimulating RNA polymerase (RNAP) recycling in case of stress conditions such as supercoiled DNA or high salt concentrations. Probably acts by releasing the RNAP, when it is trapped or immobilized on tightly supercoiled DNA. Does not activate transcription on linear DNA. Probably not involved in DNA repair. This is RNA polymerase-associated protein RapA from Haemophilus influenzae (strain ATCC 51907 / DSM 11121 / KW20 / Rd).